The sequence spans 351 residues: Phosphate acyltransferase (351 aa).

The protein belongs to the PlsX family. In terms of assembly, homodimer. Probably interacts with PlsY.

It localises to the cytoplasm. It carries out the reaction a fatty acyl-[ACP] + phosphate = an acyl phosphate + holo-[ACP]. It functions in the pathway lipid metabolism; phospholipid metabolism. Catalyzes the reversible formation of acyl-phosphate (acyl-PO(4)) from acyl-[acyl-carrier-protein] (acyl-ACP). This enzyme utilizes acyl-ACP as fatty acyl donor, but not acyl-CoA. The chain is Phosphate acyltransferase from Neisseria meningitidis serogroup B (strain ATCC BAA-335 / MC58).